The chain runs to 264 residues: MYKECFKIALGIEYNGSNYHGWQYQKFASSVQEKVELALSIIANHPVRVTCAGRTDAGVHSTGQVVHFCTSSIRNDQAWILGTNRYLPKDISVIWKRDVPMHFHARYSALSRRYRYILYNNSCRSSIFYQGLKFYHRILNVEKMNQAAQYLLGEHDFTTFRSSHCQSKTPFRKILYVNVFCINCLIIIDIVANSFLYHMVRNIVGCLIEIGISKKKVTWIRDILKFKNRTSSTKIVESNGLYLVQVQYSSLFKLPICPVGPFFV.

D56 functions as the Nucleophile in the catalytic mechanism. Residue Y114 coordinates substrate.

This sequence belongs to the tRNA pseudouridine synthase TruA family. Homodimer.

It carries out the reaction uridine(38/39/40) in tRNA = pseudouridine(38/39/40) in tRNA. Its function is as follows. Formation of pseudouridine at positions 38, 39 and 40 in the anticodon stem and loop of transfer RNAs. The chain is tRNA pseudouridine synthase A from Buchnera aphidicola subsp. Baizongia pistaciae (strain Bp).